Reading from the N-terminus, the 218-residue chain is MMQTGLDFTLVEDLVAGVDEVGRGPLCGAVVTAAVILDPTRPILGLNDSKKLTEARREKLYVEIQEKALCWFIARAEVEEIDQLNILHATMLAMQRAVEGLSITPRLALIDGNRCPQLSVPSAPVVKGDSKVPAIAAASILAKVSRDREMAAFELIYPGYGIGGHKGYPTPVHLEALARLGPTPIHRRSFAPVRAAHEARATIMMGGSISPSVGLLQD.

Residues 13–202 (DLVAGVDEVG…VRAAHEARAT (190 aa)) form the RNase H type-2 domain. A divalent metal cation-binding residues include aspartate 19, glutamate 20, and aspartate 111.

This sequence belongs to the RNase HII family. The cofactor is Mn(2+). Mg(2+) serves as cofactor.

Its subcellular location is the cytoplasm. The catalysed reaction is Endonucleolytic cleavage to 5'-phosphomonoester.. In terms of biological role, endonuclease that specifically degrades the RNA of RNA-DNA hybrids. In Pseudomonas syringae pv. syringae (strain B728a), this protein is Ribonuclease HII.